The chain runs to 726 residues: MAAPGGRGRSLSGLLPAQTSLEYALLDAVTQQEKDSLVYQYLQKVDGWEQDLSVPEFPEGLEWLNTEEPISVYKDLCGKIVVLDFFTYCCINCIHLLPDLHALEHTYSDKDGLLIIGVHSAKFPNEKVLDNIKSAVLRYNITHPMVNDADASLWQELEVSCWPTLVILGPRGNMLFSLIGEGHKDKLFLYTSIALKYYKDRGQIRDNKIGIKLYKDSLPPSPLLFPGKVTVDQVTDRLVIADTGHHRILVVWKNGQIQYSIGGPNPGRKDGIFSESTFNSPQGVAIMNNIIYVADTENHLIRKIDLEAEKVSTVAGIGIQGTDKEGGAKGEQQPISSPWDVVFGTSGSEVQRGDILWIAMAGTHQIWALLLDSGKLPKKNELTKGTCLRFAGSGNEENRNNAYPHKAGFAQPSGLSLASEDPWSCLFVADSESSTVRTVSLKDGAVKHLVGGERDPMNLFAFGDVDGVGINAKLQHPLGVTWDKKRNLLYVADSYNHKIKVVDPKTKNCTTLAGTGDTNNVTSSSFTESTFNEPGGLCIGENGELLYVADTNNHQIKVMDLETKMVSVLPIFRSENAVVDGPFLVEKQKTLPKLPKSAPSIRLSPVTACAGQTLQFKLRLDLPSGSKLTEGVSSCWFLTAEGNEWLLQGQIAAGDIENISSQPTISLQIPDDCLSLEAIVSVSVFLYYCSADSSACMMKAILFSQPLQITDTQQGCIAPVELRYVF.

The Thioredoxin domain maps to glutamine 43–aspartate 200. NHL repeat units follow at residues lysine 212–asparagine 254, asparagine 265–glutamate 307, isoleucine 335–leucine 369, phenylalanine 409–valine 439, alanine 461–lysine 505, and threonine 518–glutamate 562.

As to quaternary structure, monomer. As to expression, ubiquitous. Detected in heart, kidney, muscle, brain, lung, liver and in skin fibroblasts (at protein level).

The protein localises to the cytoplasm. The protein resides in the cytosol. In terms of biological role, required for normal embryonic development. In Homo sapiens (Human), this protein is NHL repeat-containing protein 2 (NHLRC2).